The following is a 389-amino-acid chain: Chalcone synthase 1 (389 aa).

Cys-164 is an active-site residue.

This sequence belongs to the thiolase-like superfamily. Chalcone/stilbene synthases family.

It carries out the reaction (E)-4-coumaroyl-CoA + 3 malonyl-CoA + 3 H(+) = 2',4,4',6'-tetrahydroxychalcone + 3 CO2 + 4 CoA. Its pathway is secondary metabolite biosynthesis; flavonoid biosynthesis. The primary product of this enzyme is 4,2',4',6'-tetrahydroxychalcone (also termed naringenin-chalcone or chalcone) which can under specific conditions spontaneously isomerize into naringenin. The polypeptide is Chalcone synthase 1 (CHS1) (Trifolium subterraneum (Subterranean clover)).